Consider the following 645-residue polypeptide: DNA mismatch repair protein MutL (645 aa).

It belongs to the DNA mismatch repair MutL/HexB family.

Functionally, this protein is involved in the repair of mismatches in DNA. It is required for dam-dependent methyl-directed DNA mismatch repair. May act as a 'molecular matchmaker', a protein that promotes the formation of a stable complex between two or more DNA-binding proteins in an ATP-dependent manner without itself being part of a final effector complex. This chain is DNA mismatch repair protein MutL, found in Geobacillus thermodenitrificans (strain NG80-2).